An 805-amino-acid chain; its full sequence is Leucine--tRNA ligase (805 aa).

The 'HIGH' region signature appears at 39 to 50; sequence PYPSGKGLHVGH. The short motif at 583 to 587 is the 'KMSKS' region element; it reads KMSKS. ATP is bound at residue Lys-586.

This sequence belongs to the class-I aminoacyl-tRNA synthetase family.

The protein localises to the cytoplasm. The enzyme catalyses tRNA(Leu) + L-leucine + ATP = L-leucyl-tRNA(Leu) + AMP + diphosphate. The chain is Leucine--tRNA ligase from Mycoplasmoides gallisepticum (strain R(low / passage 15 / clone 2)) (Mycoplasma gallisepticum).